The primary structure comprises 396 residues: NADH-quinone oxidoreductase subunit D 1 (396 aa).

This sequence belongs to the complex I 49 kDa subunit family. In terms of assembly, NDH-1 is composed of 14 different subunits. Subunits NuoB, C, D, E, F, and G constitute the peripheral sector of the complex.

Its subcellular location is the cell inner membrane. The catalysed reaction is a quinone + NADH + 5 H(+)(in) = a quinol + NAD(+) + 4 H(+)(out). In terms of biological role, NDH-1 shuttles electrons from NADH, via FMN and iron-sulfur (Fe-S) centers, to quinones in the respiratory chain. The immediate electron acceptor for the enzyme in this species is believed to be ubiquinone. Couples the redox reaction to proton translocation (for every two electrons transferred, four hydrogen ions are translocated across the cytoplasmic membrane), and thus conserves the redox energy in a proton gradient. In Rhizobium etli (strain ATCC 51251 / DSM 11541 / JCM 21823 / NBRC 15573 / CFN 42), this protein is NADH-quinone oxidoreductase subunit D 1.